The primary structure comprises 82 residues: Beta-neurotoxin Css9 (82 aa).

The signal sequence occupies residues M1–S17. The 64-residue stretch at K18 to R81 folds into the LCN-type CS-alpha/beta domain. 4 cysteine pairs are disulfide-bonded: C28–C80, C32–C54, C39–C61, and C43–C63.

The protein belongs to the long (4 C-C) scorpion toxin superfamily. Sodium channel inhibitor family. Beta subfamily. In terms of tissue distribution, expressed by the venom gland.

It is found in the secreted. Beta toxins bind voltage-independently at site-4 of sodium channels (Nav) and shift the voltage of activation toward more negative potentials thereby affecting sodium channel activation and promoting spontaneous and repetitive firing. This toxin compete with high affinity with 125I-Css4 bound on rat brain synaptosome and may bind with high affinity to Nav1.1/SCN1A, Nav1.2/SCN2A and Nav1.6/SCN8A. The sequence is that of Beta-neurotoxin Css9 from Centruroides suffusus (Durango bark scorpion).